The sequence spans 286 residues: Elongation factor Ts (286 aa).

The involved in Mg(2+) ion dislocation from EF-Tu stretch occupies residues 82 to 85 (TDFV). Residues 212-286 (VAAQTGQKVE…SPSKKGKKKK (75 aa)) form a disordered region. Over residues 215 to 227 (QTGQKVEQPQAAQ) the composition is skewed to polar residues. Residues 253–269 (ETDSPAAETTTEPPKTT) are compositionally biased toward low complexity.

Belongs to the EF-Ts family.

Its subcellular location is the cytoplasm. Associates with the EF-Tu.GDP complex and induces the exchange of GDP to GTP. It remains bound to the aminoacyl-tRNA.EF-Tu.GTP complex up to the GTP hydrolysis stage on the ribosome. The chain is Elongation factor Ts from Gloeothece citriformis (strain PCC 7424) (Cyanothece sp. (strain PCC 7424)).